The chain runs to 104 residues: Protein enhancer of rudimentary (104 aa).

A Phosphothreonine; by CK2 modification is found at T18. Phosphoserine; by CK2 is present on S24.

It belongs to the E(R) family.

Its function is as follows. Acts as an enhancer of the rudimentary gene. Has a role in pyrimidine biosynthesis and the cell cycle. This is Protein enhancer of rudimentary (e(r)) from Drosophila virilis (Fruit fly).